The chain runs to 441 residues: Glutamate--tRNA ligase 1 (441 aa).

The 'HIGH' region signature appears at 8–18; it reads PSPTGHIHVGN. The 'KMSKS' region signature appears at 239–243; that stretch reads ELSKR. Lysine 242 contacts ATP.

Belongs to the class-I aminoacyl-tRNA synthetase family. Glutamate--tRNA ligase type 1 subfamily. As to quaternary structure, monomer.

The protein resides in the cytoplasm. The enzyme catalyses tRNA(Glu) + L-glutamate + ATP = L-glutamyl-tRNA(Glu) + AMP + diphosphate. In terms of biological role, catalyzes the attachment of glutamate to tRNA(Glu) in a two-step reaction: glutamate is first activated by ATP to form Glu-AMP and then transferred to the acceptor end of tRNA(Glu). The chain is Glutamate--tRNA ligase 1 from Paracoccus denitrificans (strain Pd 1222).